A 177-amino-acid chain; its full sequence is Large ribosomal subunit protein uL6 (177 aa).

Belongs to the universal ribosomal protein uL6 family. Part of the 50S ribosomal subunit.

Functionally, this protein binds to the 23S rRNA, and is important in its secondary structure. It is located near the subunit interface in the base of the L7/L12 stalk, and near the tRNA binding site of the peptidyltransferase center. This Buchnera aphidicola subsp. Acyrthosiphon kondoi (Acyrthosiphon kondoi symbiotic bacterium) protein is Large ribosomal subunit protein uL6.